Consider the following 85-residue polypeptide: Alpha-mammal toxin AaH2 (85 aa).

Residues 1 to 19 (MNYLVMISLALLFVTGVES) form the signal peptide. The LCN-type CS-alpha/beta domain maps to 21 to 83 (KDGYIVDDVN…VRTKGPGRCH (63 aa)). Disulfide bonds link cysteine 31-cysteine 82, cysteine 35-cysteine 55, cysteine 41-cysteine 65, and cysteine 45-cysteine 67. The residue at position 83 (histidine 83) is a Histidine amide.

Belongs to the long (4 C-C) scorpion toxin superfamily. Sodium channel inhibitor family. Alpha subfamily. Post-translationally, the amidation of His-83 is not necessary for toxicity. As to expression, expressed by the venom gland.

Its subcellular location is the secreted. Its function is as follows. Alpha toxin that binds voltage-independently at site-3 of sodium channels (Nav), inhibits the inactivation of the activated channels, and weakly inhibits activation, thereby blocking neuronal transmission. Inserts into voltage-sensing domain IV to stabilize a deactivated state, thereby preventing fast-inactivation. Principally slows the inactivation process of TTX-sensitive sodium channels. It is active on mammalian brain Nav1.2/SCN2A (EC(50)human=0.72 nM, EC(50)rat=2.6 nM), on rat skeletal muscle Nav1.4/SCN4A (EC(50)=2.2 nM), and on human neuronal Nav1.7/SCN9A (EC(50)=6.8-51.7 nM). In vivo, intraplantar injection into mice induces spontaneous pain responses. The chain is Alpha-mammal toxin AaH2 from Androctonus australis (Sahara scorpion).